Here is a 474-residue protein sequence, read N- to C-terminus: Alanine/serine racemase (474 aa).

Pyridoxal 5'-phosphate-binding positions include 139–140 and glutamine 282; that span reads GS. An N6-(pyridoxal phosphate)lysine modification is found at lysine 308. Residue threonine 336 coordinates pyridoxal 5'-phosphate.

It belongs to the class-III pyridoxal-phosphate-dependent aminotransferase family. In terms of assembly, homohexamer. The cofactor is pyridoxal 5'-phosphate.

It carries out the reaction L-alanine = D-alanine. It catalyses the reaction L-serine = D-serine. With respect to regulation, completely inhibited by hydroxylamine hydrochloride. In terms of biological role, catalyzes the interconversion of L-alanine and D-alanine, and L-serine and D-serine. Has weak activity with valine and threonine. This chain is Alanine/serine racemase, found in Pyrococcus horikoshii (strain ATCC 700860 / DSM 12428 / JCM 9974 / NBRC 100139 / OT-3).